Here is a 389-residue protein sequence, read N- to C-terminus: Large envelope protein (389 aa).

Met1 is subject to N-acetylmethionine. Residue Gly2 is the site of N-myristoyl glycine; by host attachment. A pre-S1 region spans residues 2-108 (GTNLSVPNPL…PPLRDSHPQA (107 aa)). The interval 2 to 163 (GTNLSVPNPL…FSRTGDPAPN (162 aa)) is pre-S. Residues 2 to 170 (GTNLSVPNPL…APNMESTTSG (169 aa)) lie on the Virion surface; in external conformation side of the membrane. Over 2–242 (GTNLSVPNPL…PGYRWMCLRR (241 aa)) the chain is Intravirion; in internal conformation. A disordered region spans residues 74 to 105 (LTTVPAAPPPASTNRQSGRQPTPISPPLRDSH). The span at 85–95 (STNRQSGRQPT) shows a compositional bias: polar residues. Residues 109–163 (MQWNSTTFHQALLDPRVRGLYFPAGGSSSGTVNPVPTIVSPISSIFSRTGDPAPN) form a pre-S2 region. The chain crosses the membrane as a helical span at residues 171–191 (FLGPLLVLQAGFFLLTRILTI). Topologically, residues 192–242 (PQSLDSWWTSLNFLGEAPTCPGQNSQSPTSNHSPTSCPPICPGYRWMCLRR) are intravirion; in external conformation. A helical transmembrane segment spans residues 243 to 263 (FIIFLFILLLCLIFLLVLLDY). The Virion surface portion of the chain corresponds to 264-337 (QGMLPVCPLL…WASVRFSWLS (74 aa)). Asn309 is a glycosylation site (N-linked (GlcNAc...) asparagine; by host). Residues 338–358 (LLVPFVQWFAGLSPTVWLSVI) traverse the membrane as a helical segment. The Intravirion segment spans residues 359-364 (WMMWYW). A helical membrane pass occupies residues 365–387 (GPSLYNILSPFLPLLPIFFCLWV). The Virion surface portion of the chain corresponds to 388 to 389 (YI).

It belongs to the orthohepadnavirus major surface antigen family. In its internal form (Li-HBsAg), interacts with the capsid protein and with the isoform S. Interacts with host chaperone CANX. In terms of assembly, associates with host chaperone CANX through its pre-S2 N glycan; this association may be essential for isoform M proper secretion. As to quaternary structure, interacts with isoform L. Interacts with the antigens of satellite virus HDV (HDVAgs); this interaction is required for encapsidation of HDV genomic RNA. Post-translationally, isoform M is N-terminally acetylated by host at a ratio of 90%, and N-glycosylated by host at the pre-S2 region. Myristoylated.

The protein localises to the virion membrane. The large envelope protein exists in two topological conformations, one which is termed 'external' or Le-HBsAg and the other 'internal' or Li-HBsAg. In its external conformation the protein attaches the virus to cell receptors and thereby initiating infection. This interaction determines the species specificity and liver tropism. This attachment induces virion internalization predominantly through caveolin-mediated endocytosis. The large envelope protein also assures fusion between virion membrane and endosomal membrane. In its internal conformation the protein plays a role in virion morphogenesis and mediates the contact with the nucleocapsid like a matrix protein. Functionally, the middle envelope protein plays an important role in the budding of the virion. It is involved in the induction of budding in a nucleocapsid independent way. In this process the majority of envelope proteins bud to form subviral lipoprotein particles of 22 nm of diameter that do not contain a nucleocapsid. The polypeptide is Large envelope protein (Hepatitis B virus genotype C subtype adr (isolate Japan/A4/1994) (HBV-C)).